The primary structure comprises 372 residues: Lipid-A-disaccharide synthase (372 aa).

This sequence belongs to the LpxB family.

The enzyme catalyses a lipid X + a UDP-2-N,3-O-bis[(3R)-3-hydroxyacyl]-alpha-D-glucosamine = a lipid A disaccharide + UDP + H(+). It functions in the pathway bacterial outer membrane biogenesis; LPS lipid A biosynthesis. Functionally, condensation of UDP-2,3-diacylglucosamine and 2,3-diacylglucosamine-1-phosphate to form lipid A disaccharide, a precursor of lipid A, a phosphorylated glycolipid that anchors the lipopolysaccharide to the outer membrane of the cell. The protein is Lipid-A-disaccharide synthase of Thiobacillus denitrificans (strain ATCC 25259 / T1).